Here is a 308-residue protein sequence, read N- to C-terminus: Aspartate carbamoyltransferase catalytic subunit (308 aa).

Arginine 49 and threonine 50 together coordinate carbamoyl phosphate. L-aspartate is bound at residue lysine 77. Carbamoyl phosphate-binding residues include arginine 99, histidine 127, and glutamine 130. Arginine 160 and arginine 211 together coordinate L-aspartate. The carbamoyl phosphate site is built by alanine 252 and proline 253.

Belongs to the aspartate/ornithine carbamoyltransferase superfamily. ATCase family. In terms of assembly, heterododecamer (2C3:3R2) of six catalytic PyrB chains organized as two trimers (C3), and six regulatory PyrI chains organized as three dimers (R2).

The enzyme catalyses carbamoyl phosphate + L-aspartate = N-carbamoyl-L-aspartate + phosphate + H(+). It participates in pyrimidine metabolism; UMP biosynthesis via de novo pathway; (S)-dihydroorotate from bicarbonate: step 2/3. Its function is as follows. Catalyzes the condensation of carbamoyl phosphate and aspartate to form carbamoyl aspartate and inorganic phosphate, the committed step in the de novo pyrimidine nucleotide biosynthesis pathway. The chain is Aspartate carbamoyltransferase catalytic subunit from Geobacillus thermodenitrificans (strain NG80-2).